A 265-amino-acid polypeptide reads, in one-letter code: Isoprenyl transferase 1 (265 aa).

The active site involves Asp43. Residue Asp43 coordinates Mg(2+). Residues 44–47, Trp48, His61, and 89–91 each bind substrate; these read GNRR and STE. Residue Asn92 is the Proton acceptor of the active site. Substrate contacts are provided by residues Arg95, Arg214, and 220–222; that span reads RLS. Glu233 contacts Mg(2+).

The protein belongs to the UPP synthase family. As to quaternary structure, homodimer. Requires Mg(2+) as cofactor.

Functionally, catalyzes the condensation of isopentenyl diphosphate (IPP) with allylic pyrophosphates generating different type of terpenoids. This chain is Isoprenyl transferase 1, found in Corynebacterium diphtheriae (strain ATCC 700971 / NCTC 13129 / Biotype gravis).